The primary structure comprises 416 residues: CC-adding tRNA nucleotidyltransferase (416 aa).

CTP is bound at residue 31–34 (GAVR). The Mg(2+) site is built by Asp46 and Asp48. CTP is bound by residues 106 to 107 (RD), Asn111, 148 to 157 (DPLRLLRAYR), and Arg188.

Belongs to the tRNA nucleotidyltransferase/poly(A) polymerase family. Mg(2+) serves as cofactor.

It catalyses the reaction a tRNA precursor + 2 CTP = a tRNA with a 3' CC end + 2 diphosphate. Functionally, tRNA nucleotidyltransferase involved in the synthesis of the tRNA CCA terminus. Adds the two cytidine residues to tRNA. In Synechocystis sp. (strain ATCC 27184 / PCC 6803 / Kazusa), this protein is CC-adding tRNA nucleotidyltransferase.